A 984-amino-acid polypeptide reads, in one-letter code: Probable beta-galactosidase C (984 aa).

The N-terminal stretch at 1–23 is a signal peptide; the sequence is MRLLSFIYLVWLALLTGTPQVSA. The substrate site is built by Tyr-82, Asn-127, Ala-128, Glu-129, and Asn-187. The Proton donor role is filled by Glu-188. The N-linked (GlcNAc...) asparagine glycan is linked to Asn-197. A substrate-binding site is contributed by Tyr-251. An intrachain disulfide couples Cys-257 to Cys-304. N-linked (GlcNAc...) asparagine glycosylation occurs at Asn-276. Glu-287 functions as the Nucleophile in the catalytic mechanism. Tyr-353 is a substrate binding site. 10 N-linked (GlcNAc...) asparagine glycosylation sites follow: Asn-391, Asn-421, Asn-434, Asn-517, Asn-602, Asn-677, Asn-715, Asn-720, Asn-759, and Asn-805.

It belongs to the glycosyl hydrolase 35 family.

The protein resides in the secreted. The catalysed reaction is Hydrolysis of terminal non-reducing beta-D-galactose residues in beta-D-galactosides.. In terms of biological role, cleaves beta-linked terminal galactosyl residues from gangliosides, glycoproteins, and glycosaminoglycans. This chain is Probable beta-galactosidase C (lacC), found in Aspergillus oryzae (strain ATCC 42149 / RIB 40) (Yellow koji mold).